A 393-amino-acid chain; its full sequence is MNSMHPETLMVHGGMDGLTEAGVHVPAIDLSTTNPVNDVATGGDSYEWLATGHALKDGDSAVYQRLWQPGVARFETALAELEHADEAVAFATGMAAMTAALLAAVNAGTPHIVAVRPLYGGSDHLLETGLLGTTVTWAKEAEIASAIQDDTGLVIVETPANPSLDLVDLDSVVAAAGTVPVLVDNTFCTPVLQQPIRHGAALVLHSATKYLGGHGDAMGGIIATNSDWAMRLRQVRAITGALLHPMGAYLLHRGLRTLAVRMRAAQTTAGELAERLAAHPAITAVHYPGLNGQDPRGLLGRQMSGGGAMIALELAGGFDAARSFVEHCSLVVHAVSLGGADTLIQHPASLTHRPVAATAKPGDGLIRLSVGLEHVDDLEDDLIAALDASRAAA.

Pyridoxal 5'-phosphate is bound by residues 63–65 (YQR) and 93–94 (GM). Y119 provides a ligand contact to L-homocysteine. 206–208 (SAT) is a pyridoxal 5'-phosphate binding site. K209 carries the post-translational modification N6-(pyridoxal phosphate)lysine. R367 is a binding site for L-homocysteine. L-methionine is bound at residue R367.

It belongs to the trans-sulfuration enzymes family. L-methionine gamma-lyase subfamily. As to quaternary structure, homotetramer. It depends on pyridoxal 5'-phosphate as a cofactor.

The catalysed reaction is L-methionine + H2O = methanethiol + 2-oxobutanoate + NH4(+). The enzyme catalyses L-homocysteine + H2O = 2-oxobutanoate + hydrogen sulfide + NH4(+) + H(+). In terms of biological role, catalyzes the alpha,gamma-elimination of L-methionine to produce methanethiol, 2-oxobutanoate and ammonia. Is also able to catalyze the alpha,gamma-elimination of L-homocysteine. The polypeptide is L-methionine gamma-lyase (Brevibacterium sandarakinum).